We begin with the raw amino-acid sequence, 163 residues long: Nucleotide-binding protein CKO_02735 (163 aa).

This sequence belongs to the YajQ family.

In terms of biological role, nucleotide-binding protein. The sequence is that of Nucleotide-binding protein CKO_02735 from Citrobacter koseri (strain ATCC BAA-895 / CDC 4225-83 / SGSC4696).